The primary structure comprises 318 residues: Coproporphyrin III ferrochelatase (318 aa).

2 residues coordinate Fe(2+): H186 and E268.

It belongs to the ferrochelatase family.

The protein resides in the cytoplasm. It catalyses the reaction Fe-coproporphyrin III + 2 H(+) = coproporphyrin III + Fe(2+). It participates in porphyrin-containing compound metabolism; protoheme biosynthesis. Functionally, involved in coproporphyrin-dependent heme b biosynthesis. Catalyzes the insertion of ferrous iron into coproporphyrin III to form Fe-coproporphyrin III. The sequence is that of Coproporphyrin III ferrochelatase from Lactococcus lactis subsp. cremoris (strain MG1363).